A 283-amino-acid polypeptide reads, in one-letter code: Nudix hydrolase 6 (283 aa).

A Nudix hydrolase domain is found at 101-233 (SHRIGVGAFV…KKELFRFMAN (133 aa)). The short motif at 139–160 (GVVKEGENIWEGALREVEEETG) is the Nudix box element. Glu154, Glu158, and Glu204 together coordinate a divalent metal cation.

This sequence belongs to the Nudix hydrolase family. The cofactor is Mg(2+). It depends on Mn(2+) as a cofactor. Expressed in stems and leaves. Weakly or not expressed in roots.

It catalyses the reaction ADP-D-ribose + H2O = D-ribose 5-phosphate + AMP + 2 H(+). It carries out the reaction NAD(+) + H2O = beta-nicotinamide D-ribonucleotide + AMP + 2 H(+). The catalysed reaction is NADH + H2O = reduced beta-nicotinamide D-ribonucleotide + AMP + 2 H(+). Probably mediates the hydrolysis of some nucleoside diphosphate derivatives. In vitro, it can use both NADH and ADP-ribose as substrates; however the relevance of such substrates in vivo is unclear. The protein is Nudix hydrolase 6 of Arabidopsis thaliana (Mouse-ear cress).